A 582-amino-acid chain; its full sequence is Aspartate--tRNA(Asp/Asn) ligase (582 aa).

Glu177 contributes to the L-aspartate binding site. The aspartate stretch occupies residues 201 to 204; sequence QLFK. Arg223 contributes to the L-aspartate binding site. ATP contacts are provided by residues 223-225 and Gln232; that span reads RDE. An L-aspartate-binding site is contributed by His447. Glu481 is an ATP binding site. Arg488 serves as a coordination point for L-aspartate. 533-536 lines the ATP pocket; sequence GLDR.

The protein belongs to the class-II aminoacyl-tRNA synthetase family. Type 1 subfamily. As to quaternary structure, homodimer.

Its subcellular location is the cytoplasm. The enzyme catalyses tRNA(Asx) + L-aspartate + ATP = L-aspartyl-tRNA(Asx) + AMP + diphosphate. Its function is as follows. Aspartyl-tRNA synthetase with relaxed tRNA specificity since it is able to aspartylate not only its cognate tRNA(Asp) but also tRNA(Asn). Reaction proceeds in two steps: L-aspartate is first activated by ATP to form Asp-AMP and then transferred to the acceptor end of tRNA(Asp/Asn). This chain is Aspartate--tRNA(Asp/Asn) ligase, found in Chlamydia muridarum (strain MoPn / Nigg).